The primary structure comprises 150 residues: Anti-sigma F factor (150 aa).

This sequence belongs to the anti-sigma-factor family.

The catalysed reaction is L-seryl-[protein] + ATP = O-phospho-L-seryl-[protein] + ADP + H(+). It catalyses the reaction L-threonyl-[protein] + ATP = O-phospho-L-threonyl-[protein] + ADP + H(+). Binds to sigma F and blocks its ability to form an RNA polymerase holoenzyme (E-sigma F). Phosphorylates SpoIIAA on a serine residue. This phosphorylation may enable SpoIIAA to act as an anti-anti-sigma factor that counteracts SpoIIAB and thus releases sigma F from inhibition. This Pasteuria penetrans protein is Anti-sigma F factor.